A 316-amino-acid polypeptide reads, in one-letter code: Taste receptor type 2 member 3 (316 aa).

Residues Met1–Gly7 are Extracellular-facing. The chain crosses the membrane as a helical span at residues Ile8–Val28. Topologically, residues Ser29–Ser50 are cytoplasmic. A helical membrane pass occupies residues Leu51–Phe71. Residues Ser72–Asp86 are Extracellular-facing. The helical transmembrane segment at Val87–Tyr107 threads the bilayer. Over Cys108–Arg128 the chain is Cytoplasmic. Residues Val129–Met149 form a helical membrane-spanning segment. Over Asn150–Asn186 the chain is Extracellular. Asn166 carries an N-linked (GlcNAc...) asparagine glycan. A helical membrane pass occupies residues Leu187–Leu207. Residues Gly208–Arg234 lie on the Cytoplasmic side of the membrane. The helical transmembrane segment at Ile235–Ser255 threads the bilayer. At Ser256–Arg266 the chain is on the extracellular side. The helical transmembrane segment at Ile267–Gly287 threads the bilayer. Topologically, residues Asn288 to Ser316 are cytoplasmic.

It belongs to the G-protein coupled receptor T2R family.

Its subcellular location is the membrane. In terms of biological role, gustducin-coupled receptor implicated in the perception of bitter compounds in the oral cavity and the gastrointestinal tract. Signals through PLCB2 and the calcium-regulated cation channel TRPM5. This chain is Taste receptor type 2 member 3, found in Rattus norvegicus (Rat).